The primary structure comprises 139 residues: Natriuretic peptides A (139 aa).

The N-terminal stretch at 1 to 21 (MTALVLWGLLLLLGQHTQVNS) is a signal peptide. Residues 22–114 (HVLGRPFSAS…QDLLMSLRKR (93 aa)) constitute a propeptide that is removed on maturation. Cysteine 118 and cysteine 134 are oxidised to a cystine.

It belongs to the natriuretic peptide family.

The protein resides in the secreted. In terms of biological role, hormone playing a key role in cardiovascular homeostasis through regulation of natriuresis, diuresis, and vasodilation. Has a cGMP-stimulating activity. In Takifugu rubripes (Japanese pufferfish), this protein is Natriuretic peptides A (nppa).